The following is a 463-amino-acid chain: Asparagine--tRNA ligase (463 aa).

It belongs to the class-II aminoacyl-tRNA synthetase family. In terms of assembly, homodimer.

The protein localises to the cytoplasm. The enzyme catalyses tRNA(Asn) + L-asparagine + ATP = L-asparaginyl-tRNA(Asn) + AMP + diphosphate + H(+). This Bacillus cereus (strain ATCC 10987 / NRS 248) protein is Asparagine--tRNA ligase.